We begin with the raw amino-acid sequence, 335 residues long: Glycerol-3-phosphate dehydrogenase [NAD(P)+] (335 aa).

Ser-12, Trp-13, and Lys-107 together coordinate NADPH. Positions 107, 138, and 140 each coordinate sn-glycerol 3-phosphate. Ala-142 contacts NADPH. The sn-glycerol 3-phosphate site is built by Lys-193, Asp-246, Ser-256, Arg-257, and Asn-258. The active-site Proton acceptor is Lys-193. Arg-257 is an NADPH binding site. NADPH-binding residues include Val-281 and Glu-283.

The protein belongs to the NAD-dependent glycerol-3-phosphate dehydrogenase family.

It is found in the cytoplasm. It carries out the reaction sn-glycerol 3-phosphate + NAD(+) = dihydroxyacetone phosphate + NADH + H(+). The catalysed reaction is sn-glycerol 3-phosphate + NADP(+) = dihydroxyacetone phosphate + NADPH + H(+). Its pathway is membrane lipid metabolism; glycerophospholipid metabolism. Its function is as follows. Catalyzes the reduction of the glycolytic intermediate dihydroxyacetone phosphate (DHAP) to sn-glycerol 3-phosphate (G3P), the key precursor for phospholipid synthesis. In Geobacter sp. (strain M21), this protein is Glycerol-3-phosphate dehydrogenase [NAD(P)+].